The following is a 416-amino-acid chain: Tryptophan synthase beta chain (416 aa).

Lys109 bears the N6-(pyridoxal phosphate)lysine mark.

This sequence belongs to the TrpB family. Tetramer of two alpha and two beta chains. Pyridoxal 5'-phosphate is required as a cofactor.

It carries out the reaction (1S,2R)-1-C-(indol-3-yl)glycerol 3-phosphate + L-serine = D-glyceraldehyde 3-phosphate + L-tryptophan + H2O. It functions in the pathway amino-acid biosynthesis; L-tryptophan biosynthesis; L-tryptophan from chorismate: step 5/5. Functionally, the beta subunit is responsible for the synthesis of L-tryptophan from indole and L-serine. The polypeptide is Tryptophan synthase beta chain (Mesorhizobium japonicum (strain LMG 29417 / CECT 9101 / MAFF 303099) (Mesorhizobium loti (strain MAFF 303099))).